The primary structure comprises 397 residues: DNA-directed RNA polymerase subunit Rpo1C (397 aa).

It belongs to the RNA polymerase beta' chain family. Part of the RNA polymerase complex.

The protein localises to the cytoplasm. The enzyme catalyses RNA(n) + a ribonucleoside 5'-triphosphate = RNA(n+1) + diphosphate. DNA-dependent RNA polymerase (RNAP) catalyzes the transcription of DNA into RNA using the four ribonucleoside triphosphates as substrates. Forms part of the jaw domain. The chain is DNA-directed RNA polymerase subunit Rpo1C from Halobacterium salinarum (strain ATCC 29341 / DSM 671 / R1).